Consider the following 94-residue polypeptide: Small ribosomal subunit protein uS19 (94 aa).

This sequence belongs to the universal ribosomal protein uS19 family.

In terms of biological role, protein S19 forms a complex with S13 that binds strongly to the 16S ribosomal RNA. In Clostridium botulinum (strain Langeland / NCTC 10281 / Type F), this protein is Small ribosomal subunit protein uS19.